The primary structure comprises 339 residues: tRNA N6-adenosine threonylcarbamoyltransferase (339 aa).

2 residues coordinate Fe cation: histidine 114 and histidine 118. Substrate is bound by residues 137–141, aspartate 170, glycine 183, aspartate 187, and asparagine 277; that span reads VVSGG. Aspartate 305 provides a ligand contact to Fe cation.

It belongs to the KAE1 / TsaD family. It depends on Fe(2+) as a cofactor.

It is found in the cytoplasm. It catalyses the reaction L-threonylcarbamoyladenylate + adenosine(37) in tRNA = N(6)-L-threonylcarbamoyladenosine(37) in tRNA + AMP + H(+). In terms of biological role, required for the formation of a threonylcarbamoyl group on adenosine at position 37 (t(6)A37) in tRNAs that read codons beginning with adenine. Is involved in the transfer of the threonylcarbamoyl moiety of threonylcarbamoyl-AMP (TC-AMP) to the N6 group of A37, together with TsaE and TsaB. TsaD likely plays a direct catalytic role in this reaction. This Clostridium perfringens (strain SM101 / Type A) protein is tRNA N6-adenosine threonylcarbamoyltransferase.